The following is a 140-amino-acid chain: MKRPGDGRQESPSSTARPDNRNTGSRGEEIATSFLGQQGYRILERNFRCKGGELDIVARAPGERSLVFVEVKTRRDRSYGPPQLAVTPFKQRQISKAALTWLSRNHLHDSQARFDVIAILLEDGGRHSIEHIVNAFELAY.

A disordered region spans residues 1–27 (MKRPGDGRQESPSSTARPDNRNTGSRG). The span at 10-25 (ESPSSTARPDNRNTGS) shows a compositional bias: polar residues.

The protein belongs to the UPF0102 family.

The polypeptide is UPF0102 protein Ppro_1186 (Pelobacter propionicus (strain DSM 2379 / NBRC 103807 / OttBd1)).